The sequence spans 158 residues: Phosphopantetheine adenylyltransferase (158 aa).

Residue T8 coordinates substrate. Residues T8–F9 and H16 contribute to the ATP site. Residues K40, L72, and R86 each contribute to the substrate site. ATP-binding positions include G87 to R89, E97, and H122 to S128.

The protein belongs to the bacterial CoaD family. Homohexamer. Requires Mg(2+) as cofactor.

Its subcellular location is the cytoplasm. It carries out the reaction (R)-4'-phosphopantetheine + ATP + H(+) = 3'-dephospho-CoA + diphosphate. It functions in the pathway cofactor biosynthesis; coenzyme A biosynthesis; CoA from (R)-pantothenate: step 4/5. In terms of biological role, reversibly transfers an adenylyl group from ATP to 4'-phosphopantetheine, yielding dephospho-CoA (dPCoA) and pyrophosphate. The protein is Phosphopantetheine adenylyltransferase of Campylobacter jejuni subsp. jejuni serotype O:6 (strain 81116 / NCTC 11828).